Consider the following 2349-residue polypeptide: Reducing polyketide synthase AFT16-1 (2349 aa).

A compositionally biased stretch (basic and acidic residues) spans 1-14; it reads MNGKSRDNGHDGKR. Disordered regions lie at residues 1-21 and 37-80; these read MNGK…VPAE and TNPS…TSNS. A Ketosynthase family 3 (KS3) domain is found at 20-462; sequence AEPIAIVGTA…GTNAHTILES (443 aa). Active-site for beta-ketoacyl synthase activity residues include cysteine 194, histidine 333, and histidine 382. Residues 578 to 888 are malonyl-CoA:ACP transacylase (MAT) domain; it reads VFTGQGAQWP…LLYKGVLERF (311 aa). The interval 958 to 1092 is N-terminal hotdog fold; that stretch reads HPLLGFRSVD…GDILLSHFAK (135 aa). The dehydratase (DH) domain stretch occupies residues 958–1263; the sequence is HPLLGFRSVD…QVEGLKFSCM (306 aa). A PKS/mFAS DH domain is found at 958–1269; it reads HPLLGFRSVD…FSCMYPAQET (312 aa). The active-site Proton acceptor; for dehydratase activity is the histidine 990. Residues 1111–1269 are C-terminal hotdog fold; the sequence is MSSVEPSLFY…FSCMYPAQET (159 aa). The Proton donor; for dehydratase activity role is filled by aspartate 1170. Positions 1976–2164 are ketoreductase (KR) domain; that stretch reads SPNKTYLLVG…VVGVGYVARA (189 aa). Positions 2273 to 2347 constitute a Carrier domain; that stretch reads EILSGSLKQK…GLCLEAIGQW (75 aa). At serine 2307 the chain carries O-(pantetheine 4'-phosphoryl)serine.

It participates in mycotoxin biosynthesis. Reducing polyketide synthase; part of the gene clusters that mediate the biosynthesis of the host-selective toxins (HSTs) AF-toxins responsible for Alternaria black spot of strawberry disease by the strawberry pathotype. AF-toxin I and III are valine derivatives of 2,3-dyhydroxy-isovaleric acid and 2-hydroxy-isovaleric acid respectively, while AF II is an isoleucine derivative of 2-hydroxy-valeric acid. These derivatives are bound to a 9,10-epoxy-8-hydroxy-9-methyl-decatrienoic acid (EDA) moiety. On cellular level, AF-toxins affect plasma membrane of susceptible cells and cause a sudden increase in loss of K(+) after a few minutes of toxin treatment. The aldo-keto reductase AFTS1 catalyzes the conversion of 2-keto-isovaleric acid (2-KIV) to 2-hydroxy-isovaleric acid (2-HIV) by reduction of its ketone to an alcohol. The acyl-CoA ligase AFT1, the hydrolase AFT2 and the enoyl-CoA hydratases AFT3 and AFT6, but also the polyketide synthase AFT9, the acyl-CoA dehydrogenase AFT10, the cytochrome P450 monooxygenase AFT11 and the oxidoreductase AFT12 are all involved in the biosynthesis of the AK-, AF- and ACT-toxin common EDA structural moiety. The exact function of each enzyme, and of additional enzymes identified within the AF-toxin clusters have still to be determined. This Alternaria alternata (Alternaria rot fungus) protein is Reducing polyketide synthase AFT16-1.